The following is a 202-amino-acid chain: Endothelin-1 (202 aa).

Positions 1-25 are cleaved as a signal peptide; the sequence is MDYFPMIFALLFVAFQGAPEAAVLG. The propeptide occupies 26 to 50; sequence TELSTGAESGGERPVPTTPWRPRRS. Residues 29 to 48 are disordered; that stretch reads STGAESGGERPVPTTPWRPR. 2 disulfides stabilise this stretch: cysteine 53–cysteine 67 and cysteine 55–cysteine 63. A propeptide spanning residues 74-202 is cleaved from the precursor; it reads VNTPEHVVPY…DKKVIYSRAH (129 aa). The interval 110–124 is endothelin-like; that stretch reads CQCASQTDKKCQNFC.

The protein belongs to the endothelin/sarafotoxin family.

The protein resides in the secreted. In terms of biological role, endothelins are endothelium-derived vasoconstrictor peptides. Probable ligand for G-protein coupled receptors EDNRA and EDNRB which activates PTK2B, BCAR1, BCAR3 and, GTPases RAP1 and RHOA cascade in glomerular mesangial cells. Also binds the DEAR/FBXW7-AS1 receptor. Promotes mesenteric arterial wall remodeling via activation of ROCK signaling and subsequent colocalization of NFATC3 with F-actin filaments. NFATC3 then translocates to the nucleus where it subsequently promotes the transcription of the smooth muscle hypertrophy and differentiation marker ACTA2. The protein is Endothelin-1 (EDN1) of Ovis aries (Sheep).